Reading from the N-terminus, the 340-residue chain is Guanine nucleotide-binding protein G(I)/G(S)/G(T) subunit beta-3 (340 aa).

WD repeat units lie at residues 53–83, 95–125, 141–170, 182–212, 224–254, 268–298, and 310–340; these read GHLAKIYAMHWATDSKLLVSASQDGKLIVWD, LRSSWVMTCAYAPSGNFVACGGLDNMCSIYS, AHTGYLSCCRFLDDNNIVTSSGDTTCALWD, GHTGDCMSLAVSPDFKLFISGACDASAKLWD, GHESDINAICFFPNGEAICTGSDDASCRLFD, SIICGITSVAFSLSGRLLFAGYDDFNCNIWD, and GHDNRVSCLGVTADGMAVATGSWDSFLKVWN.

This sequence belongs to the WD repeat G protein beta family. G proteins are composed of 3 units, alpha, beta and gamma. Interacts with RASD2.

The protein localises to the cytoplasm. It is found in the perinuclear region. Functionally, guanine nucleotide-binding proteins (G proteins) are involved as a modulator or transducer in various transmembrane signaling systems. The beta and gamma chains are required for the GTPase activity, for replacement of GDP by GTP, and for G protein-effector interaction. In Canis lupus familiaris (Dog), this protein is Guanine nucleotide-binding protein G(I)/G(S)/G(T) subunit beta-3 (GNB3).